The primary structure comprises 219 residues: Rho-related protein racN (219 aa).

12–19 (GDVTIGKT) is a binding site for GTP. Residues 33–41 (YIPTIFDNH) carry the Effector region motif. GTP contacts are provided by residues 58–62 (DTGGG) and 114–117 (TKTD). Position 216 is a cysteine methyl ester (Cys216). A lipid anchor (S-geranylgeranyl cysteine) is attached at Cys216. A propeptide spans 217 to 219 (IIC) (removed in mature form).

This sequence belongs to the small GTPase superfamily. Rho family.

Its subcellular location is the cell membrane. The sequence is that of Rho-related protein racN (racN) from Dictyostelium discoideum (Social amoeba).